A 347-amino-acid chain; its full sequence is MPFLKDAVTLVKEPQQLPSIPLSWFPSSVFAAFNVTLLLFLSGLFFGFPCRWLVQNGEWAFPAITGPLFILTFFSLVSLNFSDPGILHRGSTKEDPMTVHVVRVNQRAFRLEWCPKCLFHRPPRTYHCPWCNICVEDFDHHCKWVNNCIGHRNFRLFMLLVLSLCLYSGALLVTCLTFLFRTRHLPFSLDKGMAILVAVPAAGFLIPLFLLLLIQALSVSRAESSYESKCRYHPEYNPFDQGFAKNWYLAMFAPLGPNYMSEVVCLQRPVGTAWIQEKTKPSPPRRPKHCRPGPPGPQHQPRRVPGKGPPGSGEAAALQEMRRLPASVEKSPGGPRQPTAEPAAGDP.

Transmembrane regions (helical) follow at residues 29-49 (VFAAFNVTLLLFLSGLFFGFP) and 59-79 (WAFPAITGPLFILTFFSLVSL). The region spanning 112–162 (EWCPKCLFHRPPRTYHCPWCNICVEDFDHHCKWVNNCIGHRNFRLFMLLVL) is the DHHC domain. The active-site S-palmitoyl cysteine intermediate is C142. 2 consecutive transmembrane segments (helical) span residues 156-176 (LFMLLVLSLCLYSGALLVTCL) and 194-214 (AILVAVPAAGFLIPLFLLLLI). A disordered region spans residues 275–347 (IQEKTKPSPP…PTAEPAAGDP (73 aa)).

The protein belongs to the DHHC palmitoyltransferase family.

The protein resides in the golgi apparatus membrane. It localises to the cytoplasm. Its subcellular location is the perinuclear region. The catalysed reaction is L-cysteinyl-[protein] + hexadecanoyl-CoA = S-hexadecanoyl-L-cysteinyl-[protein] + CoA. Its function is as follows. Palmitoyltransferase that mediates palmitoylation oproteins, such as RRAS and SQSTM1. Catalyzes palmitoylation of RRAS, leading to increased cell viability. Acts as a positive regulator of autophagy by mediating palmitoylation of SQSTM1, promoting affinity between SQSTM1 and ATG8 proteins and recruitment of ubiquitinated cargo proteins to autophagosomes. The polypeptide is Palmitoyltransferase ZDHHC19 (Zdhhc19) (Mus musculus (Mouse)).